Consider the following 180-residue polypeptide: uncharacterized protein (180 aa).

6 helical membrane passes run 4-24 (KSNI…LSLF), 25-45 (IKNF…WLFI), 57-77 (NLLA…GIIY), 81-101 (FLDI…GILF), 124-144 (FLTL…LLIL), and 156-176 (IIRT…FYTF).

The protein resides in the cell membrane. This is an uncharacterized protein from Methanocaldococcus jannaschii (strain ATCC 43067 / DSM 2661 / JAL-1 / JCM 10045 / NBRC 100440) (Methanococcus jannaschii).